Here is a 291-residue protein sequence, read N- to C-terminus: N-acetylmannosamine kinase (291 aa).

ATP-binding positions include 5-12 and 132-139; these read AIDIGGTK and GVGGGVVS. Zn(2+)-binding residues include His156, Cys166, Cys168, and Cys173.

The protein belongs to the ROK (NagC/XylR) family. NanK subfamily. As to quaternary structure, homodimer.

The catalysed reaction is an N-acyl-D-mannosamine + ATP = an N-acyl-D-mannosamine 6-phosphate + ADP + H(+). The protein operates within amino-sugar metabolism; N-acetylneuraminate degradation; D-fructose 6-phosphate from N-acetylneuraminate: step 2/5. Catalyzes the phosphorylation of N-acetylmannosamine (ManNAc) to ManNAc-6-P. This Shigella flexneri serotype 5b (strain 8401) protein is N-acetylmannosamine kinase.